The sequence spans 484 residues: Malonate-semialdehyde dehydrogenase 3 (484 aa).

Positions 152, 176, 179, 180, and 229 each coordinate NAD(+). The Nucleophile role is filled by Cys284. Glu384 provides a ligand contact to NAD(+).

Belongs to the aldehyde dehydrogenase family. IolA subfamily. Homotetramer.

It catalyses the reaction 3-oxopropanoate + NAD(+) + CoA + H2O = hydrogencarbonate + acetyl-CoA + NADH + H(+). The enzyme catalyses 2-methyl-3-oxopropanoate + NAD(+) + CoA + H2O = propanoyl-CoA + hydrogencarbonate + NADH + H(+). It functions in the pathway polyol metabolism; myo-inositol degradation into acetyl-CoA; acetyl-CoA from myo-inositol: step 7/7. Catalyzes the oxidation of malonate semialdehyde (MSA) and methylmalonate semialdehyde (MMSA) into acetyl-CoA and propanoyl-CoA, respectively. Is involved in a myo-inositol catabolic pathway. Bicarbonate, and not CO2, is the end-product of the enzymatic reaction. The chain is Malonate-semialdehyde dehydrogenase 3 from Geobacillus kaustophilus (strain HTA426).